Consider the following 376-residue polypeptide: Succinyl-diaminopimelate desuccinylase (376 aa).

Zn(2+) is bound at residue His-64. Residue Asp-66 is part of the active site. Position 97 (Asp-97) interacts with Zn(2+). The Proton acceptor role is filled by Glu-131. Zn(2+) is bound by residues Glu-132, Glu-160, and His-347.

Belongs to the peptidase M20A family. DapE subfamily. As to quaternary structure, homodimer. Requires Zn(2+) as cofactor. The cofactor is Co(2+).

It carries out the reaction N-succinyl-(2S,6S)-2,6-diaminopimelate + H2O = (2S,6S)-2,6-diaminopimelate + succinate. Its pathway is amino-acid biosynthesis; L-lysine biosynthesis via DAP pathway; LL-2,6-diaminopimelate from (S)-tetrahydrodipicolinate (succinylase route): step 3/3. In terms of biological role, catalyzes the hydrolysis of N-succinyl-L,L-diaminopimelic acid (SDAP), forming succinate and LL-2,6-diaminopimelate (DAP), an intermediate involved in the bacterial biosynthesis of lysine and meso-diaminopimelic acid, an essential component of bacterial cell walls. This chain is Succinyl-diaminopimelate desuccinylase, found in Wigglesworthia glossinidia brevipalpis.